A 367-amino-acid chain; its full sequence is Leucine-rich repeat-containing protein 28 (367 aa).

9 LRR repeats span residues 16–36 (KHKNLFLNYRNLHHFPLELLK), 42–63 (HLERLYMKRNSLTTLPENLAQK), 66–87 (NLVELYLHSNNIVVVPEAIGSL), 89–111 (KLQCLDLSDNALEIVCPEIGGLR), 112–133 (ALRHLRLANNQLQFLPPEVGDL), 135–156 (ELQTLDISSNRLLALPERLHLC), 158–180 (SLQYLTVDRNRLCCVPRHLCQLP), 181–202 (SLNELSMAGNHLASLPIDLGRS), and 204–226 (ELQYVYVDNNIQLKGLPSYLYNK).

The sequence is that of Leucine-rich repeat-containing protein 28 (Lrrc28) from Mus musculus (Mouse).